The primary structure comprises 303 residues: MYIQVLGSAAGGGFPQWNCNCVNCKGYRDGTLKATARTQSSIALSDDGVHWILCNASPDIRAQLQAFAPMQPARALRDTGINAIVLLDSQIDHTTGLLSLREGCPHQVWCTDMVHQDLTTGFPLFNMLSHWNGGLQWNRIELEGSFVIDACPNLKFTPFPLRSAAPPYSPHRFDPHPGDNLGLMVEDTRTGGKLFYAPGLGQVDEKLLAMMHGADCLLVDGTLWEDDEMQRRGVGTRTGREMGHLAQNGPGGMLEVLDGFPRQRKVLIHINNTNPILDEDSPERAEVLRRGVEVAFDGMSIAL.

This sequence belongs to the PqqB family.

It functions in the pathway cofactor biosynthesis; pyrroloquinoline quinone biosynthesis. Its function is as follows. May be involved in the transport of PQQ or its precursor to the periplasm. The polypeptide is Coenzyme PQQ synthesis protein B (Pseudomonas putida (strain ATCC 700007 / DSM 6899 / JCM 31910 / BCRC 17059 / LMG 24140 / F1)).